Here is an 898-residue protein sequence, read N- to C-terminus: Chaperone protein ClpB 1 (898 aa).

The region spanning 6 to 148 (PTKFTEQAWD…ELAIKAIRGS (143 aa)) is the Clp R domain. Repeat regions lie at residues 9 to 74 (FTEQ…TNRQ) and 85 to 148 (LGRS…IRGS). Residues 161–344 (EALDKYGRDL…RRFQQVYVKQ (184 aa)) are NBD1. 208 to 215 (GEPGVGKT) serves as a coordination point for ATP. The linker stretch occupies residues 345–560 (PSVDDTISIL…IAEIVAGWTG (216 aa)). Positions 395–536 (IDLVDEAAAR…KESKLLEIQG (142 aa)) form a coiled coil. The NBD2 stretch occupies residues 570–781 (ERQKLLQLEG…RIDDLIIFHT (212 aa)). Residue 620 to 627 (GPTGVGKT) coordinates ATP. The C-terminal stretch occupies residues 782–898 (LKRDELRRIV…TAVEVEVLSS (117 aa)).

It belongs to the ClpA/ClpB family. Homohexamer. The oligomerization is ATP-dependent.

It localises to the cytoplasm. In terms of biological role, part of a stress-induced multi-chaperone system, it is involved in the recovery of the cell from heat-induced damage, in cooperation with DnaK, DnaJ and GrpE. Acts before DnaK, in the processing of protein aggregates. Protein binding stimulates the ATPase activity; ATP hydrolysis unfolds the denatured protein aggregates, which probably helps expose new hydrophobic binding sites on the surface of ClpB-bound aggregates, contributing to the solubilization and refolding of denatured protein aggregates by DnaK. This Synechocystis sp. (strain ATCC 27184 / PCC 6803 / Kazusa) protein is Chaperone protein ClpB 1 (clpB1).